The following is a 171-amino-acid chain: Large ribosomal subunit protein uL15 (171 aa).

The span at 1–10 (MKLNEISDNN) shows a compositional bias: polar residues. Disordered stretches follow at residues 1–44 (MKLN…RSGV) and 150–171 (LPEA…NKAK). Positions 21–35 (RGIGSGKGKTAGRGQ) are enriched in gly residues. A compositionally biased stretch (basic and acidic residues) spans 157–171 (EQEKKAARREANKAK).

The protein belongs to the universal ribosomal protein uL15 family. In terms of assembly, part of the 50S ribosomal subunit.

Functionally, binds to the 23S rRNA. This Novosphingobium aromaticivorans (strain ATCC 700278 / DSM 12444 / CCUG 56034 / CIP 105152 / NBRC 16084 / F199) protein is Large ribosomal subunit protein uL15.